A 114-amino-acid polypeptide reads, in one-letter code: Gamma-glutamylcyclotransferase family protein ytfP (114 aa).

The protein belongs to the gamma-glutamylcyclotransferase family.

It localises to the cytoplasm. May play a role in antibiotic biosynthesis. This Citrobacter rodentium (strain ICC168) (Citrobacter freundii biotype 4280) protein is Gamma-glutamylcyclotransferase family protein ytfP (ytfP).